Reading from the N-terminus, the 862-residue chain is DNA mismatch repair protein MutS (862 aa).

608–615 contributes to the ATP binding site; it reads GPNMAGKS.

It belongs to the DNA mismatch repair MutS family.

This protein is involved in the repair of mismatches in DNA. It is possible that it carries out the mismatch recognition step. This protein has a weak ATPase activity. The protein is DNA mismatch repair protein MutS of Bacteroides fragilis (strain YCH46).